The following is a 108-amino-acid chain: Probable chaperone-like protein YdbL (108 aa).

The signal sequence occupies residues 1-21 (MKKTLLLCAFLVGLVSSNVMA).

The protein resides in the periplasm. Functionally, probably acts as a chaperone-like protein that contributes to, but is not required for, the formation of the YdbH-YnbE intermembrane bridge. Affects the function and the structure of the YdbH-YnbE complex. Overexpression of ydbL causes a negative effect on YdbH-YnbE function. This is Probable chaperone-like protein YdbL (ydbL) from Escherichia coli (strain K12).